We begin with the raw amino-acid sequence, 1213 residues long: Formin (1213 aa).

5 disordered regions span residues 1-24, 66-111, 144-169, 183-216, and 357-489; these read MEGGNAGCSRQLPERAGPAESEPD, QANN…EPEP, VHTTSDTESDGESKDPDADETGTSKC, GNNQSKEESDSEGYGHSDDTVGRDDTELHPPISQ, and DVSK…PKAN. Basic and acidic residues-rich tracts occupy residues 187-210 and 431-464; these read SKEESDSEGYGHSDDTVGRDDTEL and EAIKRKMRNEKESLKAVFERSKSKPGDGPSDKSP. Coiled coils occupy residues 428–450 and 503–572; these read SELEAIKRKMRNEKESLKAVFER and EYQA…IGVS. The segment at 624 to 774 is disordered; sequence ISTQGENKDS…PRKPAIEPSR (151 aa). Over residues 636-647 the composition is skewed to polar residues; sequence VPSSESVLSCQP. Composition is skewed to pro residues over residues 650–672, 680–689, and 718–751; these read MLPPSPPPPPPPPPPPPPPPPPF, LVPPPPPLPT, and PAPPAPPPLPGLGPPVPPPLPGSGLPPPPPPPGP. One can recognise an FH1 domain in the interval 652 to 751; sequence PPSPPPPPPP…LPPPPPPPGP (100 aa). A compositionally biased stretch (polar residues) spans 755 to 764; sequence FNSTLSSSQG. Residues 766–1182 enclose the FH2 domain; sequence RKPAIEPSRP…KVAQQSVSKL (417 aa). A coiled-coil region spans residues 1050–1125; sequence FQASQVKFED…ENAQKCFEET (76 aa). Residues 1193–1213 form a disordered region; that stretch reads INPTASLKERLRQKEANVNAN.

Belongs to the formin homology family. Cappuccino subfamily. In terms of tissue distribution, present in the adult brain, kidney, brain, heart and intestine and throughout the embryo.

The protein localises to the nucleus. Is important for morphogenesis of limb and kidney and may be involved in determining dorsoventral neural tube polarity and motor neuron induction. It may also have a function in differentiated cells or be involved in maintaining specific differentiated states. This Gallus gallus (Chicken) protein is Formin (LD).